The following is a 214-amino-acid chain: Probable transaldolase (214 aa).

Lysine 83 (schiff-base intermediate with substrate) is an active-site residue.

Belongs to the transaldolase family. Type 3B subfamily.

It localises to the cytoplasm. It catalyses the reaction D-sedoheptulose 7-phosphate + D-glyceraldehyde 3-phosphate = D-erythrose 4-phosphate + beta-D-fructose 6-phosphate. Its pathway is carbohydrate degradation; pentose phosphate pathway; D-glyceraldehyde 3-phosphate and beta-D-fructose 6-phosphate from D-ribose 5-phosphate and D-xylulose 5-phosphate (non-oxidative stage): step 2/3. Functionally, transaldolase is important for the balance of metabolites in the pentose-phosphate pathway. This is Probable transaldolase from Carboxydothermus hydrogenoformans (strain ATCC BAA-161 / DSM 6008 / Z-2901).